The chain runs to 251 residues: Zwei Ig domain protein zig-3 (251 aa).

The N-terminal stretch at 1–19 is a signal peptide; that stretch reads MLLICISVLAAISAHPLSS. 2 consecutive Ig-like C2-type domains span residues 42–144 and 160–244; these read PSLK…AKIS and PVIT…TFLY. Disulfide bonds link cysteine 65-cysteine 128 and cysteine 181-cysteine 228.

As to expression, expressed in PVT, AIM and ASI neurons, in vulva and weakly in body wall muscles.

Its subcellular location is the secreted. Functionally, required for maintaining axon position of PVQ and PVP neurons postembryonically in the ventral nerve cord (VNC) by preventing axons drifting into the opposite side of the VNC that could occur during body growth and movement. This Caenorhabditis elegans protein is Zwei Ig domain protein zig-3.